We begin with the raw amino-acid sequence, 903 residues long: Protein translocase subunit SecA (903 aa).

ATP-binding positions include Gln-87, 105–109 (GEGKT), and Asp-512. Residues Cys-887, Cys-889, Cys-898, and His-899 each coordinate Zn(2+).

The protein belongs to the SecA family. Monomer and homodimer. Part of the essential Sec protein translocation apparatus which comprises SecA, SecYEG and auxiliary proteins SecDF-YajC and YidC. Zn(2+) serves as cofactor.

Its subcellular location is the cell inner membrane. It is found in the cytoplasm. The catalysed reaction is ATP + H2O + cellular proteinSide 1 = ADP + phosphate + cellular proteinSide 2.. Functionally, part of the Sec protein translocase complex. Interacts with the SecYEG preprotein conducting channel. Has a central role in coupling the hydrolysis of ATP to the transfer of proteins into and across the cell membrane, serving both as a receptor for the preprotein-SecB complex and as an ATP-driven molecular motor driving the stepwise translocation of polypeptide chains across the membrane. The polypeptide is Protein translocase subunit SecA (Photorhabdus laumondii subsp. laumondii (strain DSM 15139 / CIP 105565 / TT01) (Photorhabdus luminescens subsp. laumondii)).